A 389-amino-acid chain; its full sequence is Alkanesulfonate monooxygenase (389 aa).

The protein belongs to the SsuD family.

It catalyses the reaction an alkanesulfonate + FMNH2 + O2 = an aldehyde + FMN + sulfite + H2O + 2 H(+). In terms of biological role, catalyzes the desulfonation of aliphatic sulfonates. The chain is Alkanesulfonate monooxygenase from Variovorax paradoxus (strain S110).